We begin with the raw amino-acid sequence, 222 residues long: Glutathione S-transferase A1 (222 aa).

Met1 bears the N-acetylmethionine mark. At Ala2 the chain carries N-acetylalanine; in Glutathione S-transferase A1, N-terminally processed. The GST N-terminal domain maps to Glu3–Gly83. Position 4 is an N6-succinyllysine (Lys4). Glutathione contacts are provided by residues Tyr9, Arg45, Gln54–Val55, and Gln67–Thr68. Positions Asp85–Pro207 constitute a GST C-terminal domain.

Belongs to the GST superfamily. Alpha family. In terms of assembly, homodimer or heterodimer of GSTA1 and GSTA2. Liver.

The protein resides in the cytoplasm. The enzyme catalyses RX + glutathione = an S-substituted glutathione + a halide anion + H(+). The catalysed reaction is prostaglandin A2 + glutathione = prostaglandin A2-S-(R)-glutathione. It carries out the reaction prostaglandin J2 + glutathione = prostaglandin J2-S-(R)-glutathione. It catalyses the reaction (13S)-hydroperoxy-(9Z,11E)-octadecadienoate + 2 glutathione = (13S)-hydroxy-(9Z,11E)-octadecadienoate + glutathione disulfide + H2O. The enzyme catalyses androst-5-ene-3,17-dione = androst-4-ene-3,17-dione. The isomerase activity is inhibited by S-methylglutathione (GSMe). Functionally, glutathione S-transferase that catalyzes the nucleophilic attack of the sulfur atom of glutathione on the electrophilic groups of a wide range of exogenous and endogenous compounds. Involved in the formation of glutathione conjugates of both prostaglandin A2 (PGA2) and prostaglandin J2 (PGJ2). It also catalyzes the isomerization of D5-androstene-3,17-dione (AD) into D4-androstene-3,17-dione and may therefore play an important role in hormone biosynthesis. Through its glutathione-dependent peroxidase activity toward the fatty acid hydroperoxide (13S)-hydroperoxy-(9Z,11E)-octadecadienoate/13-HPODE it is also involved in the metabolism of oxidized linoleic acid. This is Glutathione S-transferase A1 (GSTA1) from Homo sapiens (Human).